Here is a 41-residue protein sequence, read N- to C-terminus: Ranatuerin-2PLg (41 aa).

Residues 1–11 (DDGVEMTEEEV) constitute a propeptide that is removed on maturation. A disulfide bond links Cys-36 and Cys-41.

It belongs to the frog skin active peptide (FSAP) family. Ranatuerin subfamily.

The protein resides in the secreted. In terms of biological role, antimicrobial peptide. The sequence is that of Ranatuerin-2PLg from Lithobates palustris (Pickerel frog).